The following is a 456-amino-acid chain: Adenylosuccinate lyase (456 aa).

N(6)-(1,2-dicarboxyethyl)-AMP-binding positions include 15–16, 90–92, and 122–123; these read RY, NHD, and TS. Residue H171 is the Proton donor/acceptor of the active site. Q248 serves as a coordination point for N(6)-(1,2-dicarboxyethyl)-AMP. S296 (proton donor/acceptor) is an active-site residue. Residues S297, 302-304, N310, R336, and 341-345 contribute to the N(6)-(1,2-dicarboxyethyl)-AMP site; these read KVN and STVLR.

Belongs to the lyase 1 family. Adenylosuccinate lyase subfamily. Homotetramer.

The enzyme catalyses N(6)-(1,2-dicarboxyethyl)-AMP = fumarate + AMP. It catalyses the reaction (2S)-2-[5-amino-1-(5-phospho-beta-D-ribosyl)imidazole-4-carboxamido]succinate = 5-amino-1-(5-phospho-beta-D-ribosyl)imidazole-4-carboxamide + fumarate. The catalysed reaction is (2S)-2-amino-2'-deoxyadenylo-succinate = dZMP + fumarate. Its pathway is purine metabolism; AMP biosynthesis via de novo pathway; AMP from IMP: step 2/2. It participates in purine metabolism; IMP biosynthesis via de novo pathway; 5-amino-1-(5-phospho-D-ribosyl)imidazole-4-carboxamide from 5-amino-1-(5-phospho-D-ribosyl)imidazole-4-carboxylate: step 2/2. The protein operates within purine metabolism. Its function is as follows. Catalyzes two reactions in de novo purine nucleotide biosynthesis. Catalyzes the breakdown of 5-aminoimidazole- (N-succinylocarboxamide) ribotide (SAICAR or 2-[5-amino-1-(5-phospho-beta-D-ribosyl)imidazole-4-carboxamido]succinate) to 5-aminoimidazole-4-carboxamide ribotide (AICAR or 5-amino-1-(5-phospho-beta-D-ribosyl)imidazole-4-carboxamide) and fumarate, and of adenylosuccinate (ADS or N(6)-(1,2-dicarboxyethyl)-AMP) to adenosine monophosphate (AMP) and fumarate. (Microbial infection) Catalyzes the conversion of 2-amino-2'-deoxyadenylo-succinate to dZMP and fumarate, when the bacterium is infected by a phage that produces the substrate of this reaction, a step in the synthesis of dZTP (2-amino-2'-deoxyadenosine 5'-triphosphate), which is a nucleotide then used by the phage as a DNA polymerase substrate. This chain is Adenylosuccinate lyase, found in Vibrio cholerae serotype O1 (strain ATCC 39541 / Classical Ogawa 395 / O395).